Here is a 78-residue protein sequence, read N- to C-terminus: Large ribosomal subunit protein bL28B (78 aa).

Positions 1-29 (MSAHCQVTGRKPGFGNTVSHSHRRSRRRW) are disordered. Residues 20-29 (HSHRRSRRRW) are compositionally biased toward basic residues.

This sequence belongs to the bacterial ribosomal protein bL28 family.

The sequence is that of Large ribosomal subunit protein bL28B (rpmB2) from Mycobacterium bovis (strain ATCC BAA-935 / AF2122/97).